Reading from the N-terminus, the 139-residue chain is Putative pre-16S rRNA nuclease (139 aa).

It belongs to the YqgF nuclease family.

It localises to the cytoplasm. In terms of biological role, could be a nuclease involved in processing of the 5'-end of pre-16S rRNA. The chain is Putative pre-16S rRNA nuclease from Streptococcus uberis (strain ATCC BAA-854 / 0140J).